The chain runs to 104 residues: MDKSKRLFLKSKRFFRRRLPPIQSGDRIDYKNMSLISRFISEQGKILSRRVNRLTLKQQRLITIAIKQARILSSLPFINNEKKQFEKSELTATRTTTVFKTKKR.

It belongs to the bacterial ribosomal protein bS18 family. Part of the 30S ribosomal subunit.

The protein resides in the plastid. Its subcellular location is the chloroplast. The protein is Small ribosomal subunit protein bS18c of Lotus japonicus (Lotus corniculatus var. japonicus).